We begin with the raw amino-acid sequence, 729 residues long: uncharacterized protein (729 aa).

It belongs to the mimivirus L515/L516 family.

Its subcellular location is the virion. This is an uncharacterized protein from Acanthamoeba polyphaga mimivirus (APMV).